The following is a 143-amino-acid chain: Large ribosomal subunit protein uL11 (143 aa).

Belongs to the universal ribosomal protein uL11 family. In terms of assembly, part of the ribosomal stalk of the 50S ribosomal subunit. Interacts with L10 and the large rRNA to form the base of the stalk. L10 forms an elongated spine to which L12 dimers bind in a sequential fashion forming a multimeric L10(L12)X complex. In terms of processing, one or more lysine residues are methylated.

Its function is as follows. Forms part of the ribosomal stalk which helps the ribosome interact with GTP-bound translation factors. This chain is Large ribosomal subunit protein uL11, found in Nitrosomonas eutropha (strain DSM 101675 / C91 / Nm57).